The sequence spans 298 residues: Cation-efflux pump FieF (298 aa).

A helical membrane pass occupies residues 24–44 (LLIKIFAWWYTGSVSILAALV). Asp45 and Asp49 together coordinate Zn(2+). 2 helical membrane-spanning segments follow: residues 80-100 (SLAA…LTSI) and 112-132 (PGVG…LVTF). Zn(2+) contacts are provided by His151 and Asp155. Helical transmembrane passes span 154-174 (SDVM…YGWH) and 176-196 (ADAL…LRMG).

It belongs to the cation diffusion facilitator (CDF) transporter (TC 2.A.4) family. FieF subfamily. As to quaternary structure, homodimer.

The protein resides in the cell inner membrane. The enzyme catalyses Zn(2+)(in) + H(+)(out) = Zn(2+)(out) + H(+)(in). It carries out the reaction Cd(2+)(in) + H(+)(out) = Cd(2+)(out) + H(+)(in). It catalyses the reaction Fe(2+)(in) + H(+)(out) = Fe(2+)(out) + H(+)(in). Divalent metal cation transporter which exports Zn(2+), Cd(2+) and possibly Fe(2+). May be involved in zinc and iron detoxification by efflux. This chain is Cation-efflux pump FieF, found in Salmonella typhi.